Consider the following 420-residue polypeptide: Tyrosine--tRNA ligase 2 (420 aa).

Tyrosine 36 lines the L-tyrosine pocket. Positions 41 to 50 (PTADSLHIGH) match the 'HIGH' region motif. Positions 171 and 175 each coordinate L-tyrosine. The short motif at 231–235 (KFGKT) is the 'KMSKS' region element. An ATP-binding site is contributed by lysine 234. Residues 354 to 420 (LSLVDLLVTS…GKKKYFLLKY (67 aa)) form the S4 RNA-binding domain.

It belongs to the class-I aminoacyl-tRNA synthetase family. TyrS type 1 subfamily. Homodimer.

Its subcellular location is the cytoplasm. It carries out the reaction tRNA(Tyr) + L-tyrosine + ATP = L-tyrosyl-tRNA(Tyr) + AMP + diphosphate + H(+). In terms of biological role, catalyzes the attachment of tyrosine to tRNA(Tyr) in a two-step reaction: tyrosine is first activated by ATP to form Tyr-AMP and then transferred to the acceptor end of tRNA(Tyr). The sequence is that of Tyrosine--tRNA ligase 2 from Enterococcus faecalis (strain ATCC 700802 / V583).